The sequence spans 360 residues: DNA integrity scanning protein DisA (360 aa).

Positions 9 to 147 constitute a DAC domain; the sequence is DDEIIEVLRM…GSRKYILRET (139 aa). Residues Gly76, Leu94, and 107–111 contribute to the ATP site; that span reads TRHKT.

This sequence belongs to the DisA family. As to quaternary structure, homooctamer. It depends on Mg(2+) as a cofactor.

The enzyme catalyses 2 ATP = 3',3'-c-di-AMP + 2 diphosphate. Its function is as follows. Participates in a DNA-damage check-point that is active prior to asymmetric division when DNA is damaged. DisA forms globular foci that rapidly scan along the chromosomes during sporulation, searching for lesions. When a lesion is present, DisA pauses at the lesion site. This triggers a cellular response that culminates in a temporary block in sporulation initiation. Functionally, also has diadenylate cyclase activity, catalyzing the condensation of 2 ATP molecules into cyclic di-AMP (c-di-AMP). c-di-AMP acts as a signaling molecule that couples DNA integrity with progression of sporulation. The rise in c-di-AMP level generated by DisA while scanning the chromosome, operates as a positive signal that advances sporulation; upon encountering a lesion, the DisA focus arrests at the damaged site and halts c-di-AMP synthesis. The sequence is that of DNA integrity scanning protein DisA from Acetivibrio thermocellus (strain ATCC 27405 / DSM 1237 / JCM 9322 / NBRC 103400 / NCIMB 10682 / NRRL B-4536 / VPI 7372) (Clostridium thermocellum).